The primary structure comprises 488 residues: MTASSVHSPVRQNRTGLGMRRIRHIHFVGIGGAGMCGIAEVLANQGYIVSGSDLRESAVTRHLRDCDIRVYIGHVDEHAHGADVLVVSTAVDLENPEIRWAREHRIPVVRRAEMLAELMRFRHGIAVAGTHGKTTTTSLTSTLLAEGGLDPTFVIGGKLTSAGTNARLGEGDYLVAEADESDASFLHLQPMVSIVTNIDADHMATYAGDFARLKDTFLEFLHNLPFYGLAVLCLDDDNVRGLLPRVQRQFVTYGFAEDADYRLRDFVQRGGEVQFTAERPPGMAPLEIRLGMPGRHNALNALAAIAVASDAGVDDAAIQQGLLHFAGVGRRFQVHGHYPAPGGEGDVMLVDDYGHHPREVEMVIDAVRAGWPERRLVMLYQPHRYSRTRDLYEDFVRVLSGVDTLLLLDVYSAGESSIPGAEGRTLAGSIRQRGQVDPIFVESKQELPALLSRVLRPDDILITQGAGDIGGISLRLAAGQLDLNGMEL.

Residue 129-135 participates in ATP binding; sequence GTHGKTT.

The protein belongs to the MurCDEF family.

The protein resides in the cytoplasm. The enzyme catalyses UDP-N-acetyl-alpha-D-muramate + L-alanine + ATP = UDP-N-acetyl-alpha-D-muramoyl-L-alanine + ADP + phosphate + H(+). The protein operates within cell wall biogenesis; peptidoglycan biosynthesis. Cell wall formation. This Chromohalobacter salexigens (strain ATCC BAA-138 / DSM 3043 / CIP 106854 / NCIMB 13768 / 1H11) protein is UDP-N-acetylmuramate--L-alanine ligase.